A 433-amino-acid polypeptide reads, in one-letter code: MRAEGDGGLERFCSPGKGRGLRALQPFQVGDLLFSCPAYAYVLTVSERGNHCEFCFARKEGLSKCGRCKQAFYCNVECQREDWPMHKLECSPMVVFGENWNPSETVRLTARILAKQKIHPERTPSEKLLAVKEFESHLDKLDNEKRDLIQSDIAALHHFYSKHLEFPDNDSLVVLFAQVNCNGFTIEDEELSHLGSAIFPDVALMNHSCCPNVIVTYKGTLAEVRAVQEIHPGEEVFTSYIDLLYPTEDRNDRLRDSYFFTCECQECTTKDKDKAKVEIRKLNDPPKAETIRDMVRYARNVIEEFRRAKHYKSPSELLEICELSQEKMSCVFEDSNVYMLHMMYQAMGVCLYMQDWEGALRYGQKIIQPYSKHYPLYSLNVASMWLKLGRLYMGLENKAAGERALKKAIAIMEVAHGKDHPYISEIKQEIESH.

The SET domain occupies 7–241 (GGLERFCSPG…PGEEVFTSYI (235 aa)). 17–19 (KGR) lines the S-adenosyl-L-methionine pocket. Zn(2+)-binding residues include Cys-52, Cys-55, Cys-65, Cys-68, Cys-74, Cys-78, His-86, and Cys-90. The MYND-type zinc finger occupies 52 to 90 (CEFCFARKEGLSKCGRCKQAFYCNVECQREDWPMHKLEC). Residues His-137, 206–207 (NH), and 258–260 (YFF) contribute to the S-adenosyl-L-methionine site.

It belongs to the class V-like SAM-binding methyltransferase superfamily. In terms of assembly, interacts with RNA polymerase II and HELZ. Interacts with SIN3A and HDAC1. Interacts (via MYND-type zinc finger) with EPB41L3. Interacts (via SET domain) with p53/TP53. Interacts with RB1 and HSP90AA1.

Its subcellular location is the cytoplasm. It is found in the cytosol. The protein resides in the nucleus. The catalysed reaction is L-lysyl(4)-[histone H3] + 3 S-adenosyl-L-methionine = N(6),N(6),N(6)-trimethyl-L-lysyl(4)-[histone H3] + 3 S-adenosyl-L-homocysteine + 3 H(+). The enzyme catalyses L-lysyl-[protein] + S-adenosyl-L-methionine = N(6)-methyl-L-lysyl-[protein] + S-adenosyl-L-homocysteine + H(+). Functionally, protein-lysine N-methyltransferase that methylates both histones and non-histone proteins, including p53/TP53 and RB1. Specifically trimethylates histone H3 'Lys-4' (H3K4me3) in vivo. The activity requires interaction with HSP90alpha. Shows even higher methyltransferase activity on p53/TP53. Monomethylates 'Lys-370' of p53/TP53, leading to decreased DNA-binding activity and subsequent transcriptional regulation activity of p53/TP53. Monomethylates RB1 at 'Lys-860'. The sequence is that of N-lysine methyltransferase SMYD2 (SMYD2) from Bos taurus (Bovine).